Consider the following 573-residue polypeptide: Probable D-xylulose kinase A (573 aa).

Residues His-97, Arg-168, Asp-284, and Asn-285 each contribute to the substrate site. Residues Trp-366, 471–472 (GG), and Asn-475 contribute to the ATP site.

Belongs to the FGGY kinase family.

It localises to the cytoplasm. The enzyme catalyses D-xylulose + ATP = D-xylulose 5-phosphate + ADP + H(+). Functionally, highly specific D-xylulose kinase which participates in the catabolism of xylose. Xylose is a major component of hemicelluloses such as xylan. Most fungi utilize D-xylose via three enzymatic reactions, xylose reductase (XR), xylitol dehydrogenase (XDH), and xylulokinase, to form xylulose 5-phosphate, which enters pentose phosphate pathway. This chain is Probable D-xylulose kinase A (xkiA), found in Neosartorya fischeri (strain ATCC 1020 / DSM 3700 / CBS 544.65 / FGSC A1164 / JCM 1740 / NRRL 181 / WB 181) (Aspergillus fischerianus).